The primary structure comprises 342 residues: Dihydroorotase (342 aa).

Positions 13 and 15 each coordinate Zn(2+). Residues 15-17 and Asn41 contribute to the substrate site; that span reads HLR. Residues Lys98, His135, and His173 each contribute to the Zn(2+) site. Position 98 is an N6-carboxylysine (Lys98). A substrate-binding site is contributed by His135. Leu218 contributes to the substrate binding site. Asp246 is a binding site for Zn(2+). Residue Asp246 is part of the active site. The substrate site is built by His250 and Ala262.

Belongs to the metallo-dependent hydrolases superfamily. DHOase family. Class II DHOase subfamily. As to quaternary structure, homodimer. Zn(2+) serves as cofactor.

It carries out the reaction (S)-dihydroorotate + H2O = N-carbamoyl-L-aspartate + H(+). The protein operates within pyrimidine metabolism; UMP biosynthesis via de novo pathway; (S)-dihydroorotate from bicarbonate: step 3/3. Catalyzes the reversible cyclization of carbamoyl aspartate to dihydroorotate. In Vibrio parahaemolyticus serotype O3:K6 (strain RIMD 2210633), this protein is Dihydroorotase.